Reading from the N-terminus, the 780-residue chain is Molybdenum cofactor sulfurase (780 aa).

Lys246 bears the N6-(pyridoxal phosphate)lysine mark. Cys413 is a catalytic residue. Residues 635–780 (LRLLRQSGQR…MTCGDVVLVE (146 aa)) enclose the MOSC domain. Position 734 is a phosphoserine (Ser734).

This sequence belongs to the class-V pyridoxal-phosphate-dependent aminotransferase family. MOCOS subfamily. The cofactor is pyridoxal 5'-phosphate.

It catalyses the reaction Mo-molybdopterin + L-cysteine + AH2 = thio-Mo-molybdopterin + L-alanine + A + H2O. Functionally, sulfurates the molybdenum cofactor. Sulfation of molybdenum is essential for xanthine dehydrogenase (XDH) and aldehyde oxidase (ADO) enzymes in which molybdenum cofactor is liganded by 1 oxygen and 1 sulfur atom in active form. This chain is Molybdenum cofactor sulfurase, found in Drosophila yakuba (Fruit fly).